A 156-amino-acid polypeptide reads, in one-letter code: ATP synthase subunit b (156 aa).

Residues 7–27 (LFLQAVVFAILVWFTMKFVWP) form a helical membrane-spanning segment.

This sequence belongs to the ATPase B chain family. F-type ATPases have 2 components, F(1) - the catalytic core - and F(0) - the membrane proton channel. F(1) has five subunits: alpha(3), beta(3), gamma(1), delta(1), epsilon(1). F(0) has three main subunits: a(1), b(2) and c(10-14). The alpha and beta chains form an alternating ring which encloses part of the gamma chain. F(1) is attached to F(0) by a central stalk formed by the gamma and epsilon chains, while a peripheral stalk is formed by the delta and b chains.

It localises to the cell inner membrane. Its function is as follows. F(1)F(0) ATP synthase produces ATP from ADP in the presence of a proton or sodium gradient. F-type ATPases consist of two structural domains, F(1) containing the extramembraneous catalytic core and F(0) containing the membrane proton channel, linked together by a central stalk and a peripheral stalk. During catalysis, ATP synthesis in the catalytic domain of F(1) is coupled via a rotary mechanism of the central stalk subunits to proton translocation. In terms of biological role, component of the F(0) channel, it forms part of the peripheral stalk, linking F(1) to F(0). The protein is ATP synthase subunit b of Polaromonas naphthalenivorans (strain CJ2).